The sequence spans 196 residues: Holliday junction branch migration complex subunit RuvA (196 aa).

The interval 1–62 is domain I; it reads MYEYINGLIT…ENEMTLYGFI (62 aa). Residues 63–141 form a domain II region; sequence DENEKYLFNK…DLALSAGMTV (79 aa). The segment at 142-146 is flexible linker; that stretch reads ETVPT. The interval 147–196 is domain III; sequence TDNQALADALAALESLGYSAKDVAKLQTVLANQKDTTDGYIRSALKFLVK.

This sequence belongs to the RuvA family. As to quaternary structure, homotetramer. Forms an RuvA(8)-RuvB(12)-Holliday junction (HJ) complex. HJ DNA is sandwiched between 2 RuvA tetramers; dsDNA enters through RuvA and exits via RuvB. An RuvB hexamer assembles on each DNA strand where it exits the tetramer. Each RuvB hexamer is contacted by two RuvA subunits (via domain III) on 2 adjacent RuvB subunits; this complex drives branch migration. In the full resolvosome a probable DNA-RuvA(4)-RuvB(12)-RuvC(2) complex forms which resolves the HJ.

It is found in the cytoplasm. Functionally, the RuvA-RuvB-RuvC complex processes Holliday junction (HJ) DNA during genetic recombination and DNA repair, while the RuvA-RuvB complex plays an important role in the rescue of blocked DNA replication forks via replication fork reversal (RFR). RuvA specifically binds to HJ cruciform DNA, conferring on it an open structure. The RuvB hexamer acts as an ATP-dependent pump, pulling dsDNA into and through the RuvAB complex. HJ branch migration allows RuvC to scan DNA until it finds its consensus sequence, where it cleaves and resolves the cruciform DNA. The polypeptide is Holliday junction branch migration complex subunit RuvA (Leuconostoc citreum (strain KM20)).